We begin with the raw amino-acid sequence, 653 residues long: Amyloid beta A4 precursor protein-binding family B member 1-interacting protein (653 aa).

The disordered stretch occupies residues 82 to 141 (NNKSTAPFPPADASNSYHFHPPPMPSIITEDLSLLPPPPEFDPHYPPPPPDPLTEPKTQE). Residues 116–134 (LPPPPEFDPHYPPPPPDPL) show a composition bias toward pro residues. Residues 165–253 (KKRIVKVHMI…IHFLEKNEKY (89 aa)) enclose the Ras-associating domain. Residues 295–404 (VPELEAALYL…WVTGIRIAKY (110 aa)) enclose the PH domain. Positions 462-481 (KHGEANKQEKKSSEVNKPET) are enriched in basic and acidic residues. Residues 462–653 (KHGEANKQEK…ALQKKREPPT (192 aa)) form a disordered region. Residues 585–604 (PAPPPPPPPPAPAANVPPLP) are compositionally biased toward pro residues. Positions 605-614 (VKKHPPKPPK) are enriched in basic residues.

This sequence belongs to the MRL family.

It localises to the cell membrane. It is found in the cytoplasm. The protein localises to the cytoskeleton. Its function is as follows. Appears to function in the signal transduction from Ras activation to actin cytoskeletal remodeling. The polypeptide is Amyloid beta A4 precursor protein-binding family B member 1-interacting protein (apbb1ip) (Xenopus laevis (African clawed frog)).